The chain runs to 2778 residues: Probable ubiquitin carboxyl-terminal hydrolase FAF (2778 aa).

Positions 1–85 (MTFDTRRHTT…SQSSDDVAAS (85 aa)) are disordered. Residues 10-39 (TGQPGSTAPSSSSSTTSTTTTTTSPAQSAG) show a composition bias toward low complexity. Over residues 71 to 85 (QPATDSQSSDDVAAS) the composition is skewed to polar residues. Ser-924 is subject to Phosphoserine. The segment at 1065 to 1094 (GTGLASSPDSSSDSSTGSPPRPCPDMQRVE) is disordered. Residues 1070–1082 (SSPDSSSDSSTGS) show a composition bias toward low complexity. The USP domain maps to 1668–2062 (CGLKNAGATC…NAYMLFYTRC (395 aa)). The active-site Nucleophile is the Cys-1677. His-1986 serves as the catalytic Proton acceptor. 2 disordered regions span residues 2568 to 2632 (VSEK…GDSN) and 2644 to 2691 (AYTS…INGL). Low complexity-rich tracts occupy residues 2614-2627 (TPTTSSPSTAAWPA) and 2644-2671 (AYTSTGSGSTSGGSAPTSALTTTAGSGA). The span at 2672-2691 (NSETESSAQETTGETTINGL) shows a compositional bias: polar residues.

This sequence belongs to the peptidase C19 family. Interacts with imd. Post-translationally, ubiquitinated. Ubiquitination is enhanced by the expression of imd. As to expression, eye disks and ovaries. Expressed in larval fat body.

It catalyses the reaction Thiol-dependent hydrolysis of ester, thioester, amide, peptide and isopeptide bonds formed by the C-terminal Gly of ubiquitin (a 76-residue protein attached to proteins as an intracellular targeting signal).. In terms of biological role, ubiquitin C-terminal hydrolase involved in development and the imd/NF-kappa-B (IMD) signaling cascade. Required for eye and embryo development, and plays a role in compound eye assembly and oogenesis respectively. In the larval eye disks, cells outside the assembling facets require this protein for short-range cell interactions that prevent the mystery cells from becoming photoreceptors. Also required for nuclear migration and cellularization in early embryogenesis and could play a role in pole cell determination, development or function. Regulates the IMD signaling cascade at later stages of infection (around 6 hours post-infection) by inhibiting the expression of the antimicrobial peptides Dpt and Dro. Acts by modulating the state of imd polyubiquitination and/or stability; a function which appears to be independent of its enzymatic activity. In turn, imd enhances the polyubiquitination and stability of faf suggesting that they may form a regulatory feedback mechanism within the Imd pathway. This is Probable ubiquitin carboxyl-terminal hydrolase FAF (faf) from Drosophila melanogaster (Fruit fly).